Here is a 167-residue protein sequence, read N- to C-terminus: IGREAIVGAGLQGPFGGPWPYDALSPFDMPYGPALPAMSCGAGSFGPSSGFAPAAAYGGGLAVTSSSPISPTGLSVTSENTIEGVVAVTGQLPFLGAVVTDGIFPTVGAGDVWYGCGDGAVGIVAETPFASTSVNPAYGYGGAIGGGVPYNSYGPIGYGGCGYNALY.

The tract at residues 1-55 is left arm; that stretch reads IGREAIVGAGLQGPFGGPWPYDALSPFDMPYGPALPAMSCGAGSFGPSSGFAPAA. Residues 56–126 are central domain; that stretch reads AYGGGLAVTS…GDGAVGIVAE (71 aa). Residues 127–167 are right arm; sequence TPFASTSVNPAYGYGGAIGGGVPYNSYGPIGYGGCGYNALY.

The protein belongs to the chorion protein family.

In terms of biological role, this protein is one of many from the eggshell of the silk moth. The sequence is that of Chorion class CB protein PC404 from Antheraea polyphemus (Polyphemus moth).